We begin with the raw amino-acid sequence, 399 residues long: Lipase member K (399 aa).

The signal sequence occupies residues 1-19; the sequence is MWQLLAAACWMLLLGSMYG. Positions 78-378 constitute an AB hydrolase-1 domain; that stretch reads PAVYLQHGLI…HYNHVDFYLG (301 aa). S172 serves as the catalytic Nucleophile. A disulfide bridge connects residues C246 and C255. 2 N-linked (GlcNAc...) asparagine glycosylation sites follow: N271 and N327. Residues D343 and H372 each act as charge relay system in the active site.

Belongs to the AB hydrolase superfamily. Lipase family. In terms of tissue distribution, exclusively expressed in the epidermis within the granular keratinocytes.

The protein localises to the secreted. Plays a highly specific role in the last step of keratinocyte differentiation. May have an essential function in lipid metabolism of the most differentiated epidermal layers. This chain is Lipase member K (LIPK), found in Homo sapiens (Human).